The primary structure comprises 95 residues: Protein TusB (95 aa).

Belongs to the DsrH/TusB family. Heterohexamer, formed by a dimer of trimers. The hexameric TusBCD complex contains 2 copies each of TusB, TusC and TusD. The TusBCD complex interacts with TusE.

The protein localises to the cytoplasm. In terms of biological role, part of a sulfur-relay system required for 2-thiolation of 5-methylaminomethyl-2-thiouridine (mnm(5)s(2)U) at tRNA wobble positions. This Salmonella arizonae (strain ATCC BAA-731 / CDC346-86 / RSK2980) protein is Protein TusB.